The following is a 512-amino-acid chain: Mucin-13 (512 aa).

A signal peptide spans 1 to 18; sequence MKAIIHLTLLALLSVNTA. The Extracellular segment spans residues 19–421; that stretch reads TNQGNSADAV…GLDCKDKFQL (403 aa). Residues 22–38 show a composition bias toward polar residues; it reads GNSADAVTTTETATSGP. Disordered regions lie at residues 22-67 and 133-176; these read GNSA…PTAT and MVPS…PSNP. Positions 53–67 are enriched in low complexity; sequence TASTTANTPSFPTAT. Over residues 135–176 the composition is skewed to polar residues; it reads PSETQSNNEMSPTTEDNQSSGPPTGTALLETSTLNSTGPSNP. Residues Asn-151 and Asn-169 are each glycosylated (N-linked (GlcNAc...) asparagine). The EGF-like 1 domain occupies 173–211; that stretch reads PSNPCQDDPCADNSLCVKLHNTSFCLCLEGYYYNSSTCK. Intrachain disulfides connect Cys-177–Cys-188, Cys-182–Cys-197, and Cys-199–Cys-210. Asn-193, Asn-206, Asn-284, and Asn-332 each carry an N-linked (GlcNAc...) asparagine glycan. An SEA domain is found at 212 to 336; sequence KGKVFPGKIS…DYYGCNQTAD (125 aa). EGF-like domains follow at residues 322–361 and 363–404; these read LTLRCDYYGCNQTADDCLNGLACDCKSDLQRPNPQSPFCV and SSLK…GNCQ. Cystine bridges form between Cys-326–Cys-338, Cys-331–Cys-344, Cys-346–Cys-360, Cys-367–Cys-378, Cys-371–Cys-389, and Cys-391–Cys-403. The helical transmembrane segment at 422 to 442 threads the bilayer; the sequence is ILTIVGTIAGIVILSMIIALI. Residues 443 to 512 are Cytoplasmic-facing; it reads VTARSNNKTK…RHSSMPRPDY (70 aa). The span at 493–505 shows a compositional bias: polar residues; sequence RDSQMQNPYSRHS. The interval 493-512 is disordered; that stretch reads RDSQMQNPYSRHSSMPRPDY.

As to quaternary structure, homodimer of beta subunits. Post-translationally, cleaved into two subunits, alpha and beta, probably between the first EGF domain and the SEA domain. Beta subunit contains the cytoplasmic tail and alpha subunit the extracellular tail. The homooligomerization into dimers is dependent on intrachain disulfide bonds. Highly N-glycosylated. Highly expressed in epithelial tissues, particularly those of the gastrointestinal and respiratory tracts, such as large intestine and trachea, followed by kidney, small intestine, appendix and stomach.

Its subcellular location is the cell membrane. It is found in the apical cell membrane. The protein localises to the secreted. In terms of biological role, epithelial and hemopoietic transmembrane mucin that may play a role in cell signaling. In Homo sapiens (Human), this protein is Mucin-13 (MUC13).